Here is a 371-residue protein sequence, read N- to C-terminus: tRNA-specific 2-thiouridylase MnmA (371 aa).

Residues 13 to 20 (GMSGGVDS) and Met-39 each bind ATP. The interaction with target base in tRNA stretch occupies residues 99–101 (NPD). Residue Cys-104 is the Nucleophile of the active site. An intrachain disulfide couples Cys-104 to Cys-200. Gly-128 contacts ATP. Residues 150–152 (KDQ) form an interaction with tRNA region. Cys-200 (cysteine persulfide intermediate) is an active-site residue. Positions 308–309 (RY) are interaction with tRNA.

The protein belongs to the MnmA/TRMU family.

It is found in the cytoplasm. The enzyme catalyses S-sulfanyl-L-cysteinyl-[protein] + uridine(34) in tRNA + AH2 + ATP = 2-thiouridine(34) in tRNA + L-cysteinyl-[protein] + A + AMP + diphosphate + H(+). Its function is as follows. Catalyzes the 2-thiolation of uridine at the wobble position (U34) of tRNA, leading to the formation of s(2)U34. This Listeria welshimeri serovar 6b (strain ATCC 35897 / DSM 20650 / CCUG 15529 / CIP 8149 / NCTC 11857 / SLCC 5334 / V8) protein is tRNA-specific 2-thiouridylase MnmA.